Consider the following 459-residue polypeptide: ATP-dependent 6-phosphofructokinase (459 aa).

Residues Gly89, 154–155 (RG), and 179–182 (GDGG) each bind ATP. Asp180 contributes to the Mg(2+) binding site. Substrate contacts are provided by residues 208–210 (TID), 253–255 (MGR), Glu309, and 368–371 (YAIR). Catalysis depends on Asp210, which acts as the Proton acceptor.

It belongs to the phosphofructokinase type A (PFKA) family. PPi-dependent PFK group II subfamily. Atypical ATP-dependent clade 'X' sub-subfamily. Homodimer. Mg(2+) is required as a cofactor.

It localises to the cytoplasm. It carries out the reaction beta-D-fructose 6-phosphate + ATP = beta-D-fructose 1,6-bisphosphate + ADP + H(+). It participates in carbohydrate degradation; glycolysis; D-glyceraldehyde 3-phosphate and glycerone phosphate from D-glucose: step 3/4. AMP causes 20-40% inhibition and diphosphate causes 20-50% inhibition. ADP, citrate, PEP and FBP have no effect. Its function is as follows. Catalyzes the phosphorylation of D-fructose 6-phosphate to fructose 1,6-bisphosphate by ATP, the first committing step of glycolysis. The sequence is that of ATP-dependent 6-phosphofructokinase from Amycolatopsis methanolica.